A 223-amino-acid chain; its full sequence is Glutathione S-transferase A2 (223 aa).

An N-acetylalanine modification is found at A2. The GST N-terminal domain occupies G3 to G83. At K4 the chain carries N6-succinyllysine. Glutathione is bound by residues Y9, R45, Q54–V55, and Q67–T68. Positions D85 to M208 constitute a GST C-terminal domain.

It belongs to the GST superfamily. Alpha family. Homodimer. In terms of tissue distribution, expressed in corpus luteum, adrenal gland, testis, liver, lung, thyroid and kidney.

It localises to the cytoplasm. It carries out the reaction RX + glutathione = an S-substituted glutathione + a halide anion + H(+). In terms of biological role, conjugation of reduced glutathione to a wide number of exogenous and endogenous hydrophobic electrophiles. This Bos taurus (Bovine) protein is Glutathione S-transferase A2 (GSTA2).